A 299-amino-acid polypeptide reads, in one-letter code: MFMGSIVALITPMDLKGTVDRISLKKLVDHHVVSGTSAIVSVGTTGEMSGLTHEEHVDVVMRTLEFSDGRLPVIAGTGANSTAEAVALTNKFNDSDIAACLSVTPYYNRPNQEGLFQHFKAISESTDLPQILYNVPIRTGCDMLPITVSRLAKIKNIVGIKEATGNLNRVNQLKQLVHEDFILLSGDDLSALDFMKLGGVGVISVTANIAAKEMAELCKLANENDFSTAQHINQRLMPVHQALFIDSNPIPVKWACKELGLISHYVLRLPMTVLSEVHRDVLKQALIDSGLFYNQSNYK.

Threonine 45 contacts pyruvate. The active-site Proton donor/acceptor is the tyrosine 133. Lysine 161 (schiff-base intermediate with substrate) is an active-site residue. Isoleucine 203 provides a ligand contact to pyruvate.

This sequence belongs to the DapA family. Homotetramer; dimer of dimers.

The protein localises to the cytoplasm. The enzyme catalyses L-aspartate 4-semialdehyde + pyruvate = (2S,4S)-4-hydroxy-2,3,4,5-tetrahydrodipicolinate + H2O + H(+). It functions in the pathway amino-acid biosynthesis; L-lysine biosynthesis via DAP pathway; (S)-tetrahydrodipicolinate from L-aspartate: step 3/4. Functionally, catalyzes the condensation of (S)-aspartate-beta-semialdehyde [(S)-ASA] and pyruvate to 4-hydroxy-tetrahydrodipicolinate (HTPA). In Blochmanniella pennsylvanica (strain BPEN), this protein is 4-hydroxy-tetrahydrodipicolinate synthase.